A 981-amino-acid chain; its full sequence is Lateral signaling target protein 2 homolog (981 aa).

The tract at residues 308–462 is disordered; it reads PLGSSSIEAP…LESSDDDTDE (155 aa). 4 stretches are compositionally biased toward low complexity: residues 326 to 356, 369 to 380, 390 to 404, and 412 to 433; these read TTSS…TTNT, NNHNSNSNSSTN, SPSM…TPTA, and PSHS…PADW. Residues 434-462 show a composition bias toward acidic residues; that stretch reads SDGDDEDEDDDDIEVDEEDLESSDDDTDE. Residues Ser-544 and Ser-545 each carry the phosphoserine modification. Disordered regions lie at residues 561-642 and 749-897; these read EQMQ…SSLS and DNVF…SPPA. A compositionally biased stretch (basic residues) spans 576 to 611; the sequence is HSHRHHQRHHHHHHHRHSHQHRQPHPHRTTRSGRKR. The segment covering 630 to 642 has biased composition (low complexity); it reads LASGDTSAASSLS. Positions 760–791 are enriched in polar residues; sequence ATGQRHSAGASMQRNNTIDLASQSGEGSPSGA. Position 805 is a phosphoserine (Ser-805). Low complexity-rich tracts occupy residues 811–866 and 883–896; these read AASS…PVSA and PSSA…LSPP. An FYVE-type zinc finger spans residues 901–961; the sequence is DGKAPRCMAC…VCRDCYVREV (61 aa). Zn(2+) contacts are provided by Cys-907, Cys-910, Cys-923, Cys-926, Cys-931, Cys-934, Cys-953, and Cys-956.

The protein belongs to the lst-2 family.

Functionally, negative regulator of epidermal growth factor receptor (EGFR) signaling. This Drosophila erecta (Fruit fly) protein is Lateral signaling target protein 2 homolog.